We begin with the raw amino-acid sequence, 391 residues long: DNA-directed RNA polymerase subunit Rpo1C (391 aa).

The protein belongs to the RNA polymerase beta' chain family. In terms of assembly, part of the RNA polymerase complex.

Its subcellular location is the cytoplasm. It carries out the reaction RNA(n) + a ribonucleoside 5'-triphosphate = RNA(n+1) + diphosphate. Functionally, DNA-dependent RNA polymerase (RNAP) catalyzes the transcription of DNA into RNA using the four ribonucleoside triphosphates as substrates. Forms part of the jaw domain. The protein is DNA-directed RNA polymerase subunit Rpo1C of Thermococcus gammatolerans (strain DSM 15229 / JCM 11827 / EJ3).